A 246-amino-acid polypeptide reads, in one-letter code: 1-(5-phosphoribosyl)-5-[(5-phosphoribosylamino)methylideneamino] imidazole-4-carboxamide isomerase (246 aa).

Aspartate 7 functions as the Proton acceptor in the catalytic mechanism. Catalysis depends on aspartate 130, which acts as the Proton donor.

The protein belongs to the HisA/HisF family.

The protein localises to the cytoplasm. It catalyses the reaction 1-(5-phospho-beta-D-ribosyl)-5-[(5-phospho-beta-D-ribosylamino)methylideneamino]imidazole-4-carboxamide = 5-[(5-phospho-1-deoxy-D-ribulos-1-ylimino)methylamino]-1-(5-phospho-beta-D-ribosyl)imidazole-4-carboxamide. The protein operates within amino-acid biosynthesis; L-histidine biosynthesis; L-histidine from 5-phospho-alpha-D-ribose 1-diphosphate: step 4/9. The chain is 1-(5-phosphoribosyl)-5-[(5-phosphoribosylamino)methylideneamino] imidazole-4-carboxamide isomerase from Blochmanniella pennsylvanica (strain BPEN).